We begin with the raw amino-acid sequence, 62 residues long: Photosystem II reaction center protein Z (62 aa).

Transmembrane regions (helical) follow at residues 8–28 (AVFA…VVFA) and 41–61 (FSGT…NSLI).

The protein belongs to the PsbZ family. In terms of assembly, PSII is composed of 1 copy each of membrane proteins PsbA, PsbB, PsbC, PsbD, PsbE, PsbF, PsbH, PsbI, PsbJ, PsbK, PsbL, PsbM, PsbT, PsbY, PsbZ, Psb30/Ycf12, at least 3 peripheral proteins of the oxygen-evolving complex and a large number of cofactors. It forms dimeric complexes.

It localises to the plastid. The protein resides in the chloroplast thylakoid membrane. Its function is as follows. May control the interaction of photosystem II (PSII) cores with the light-harvesting antenna, regulates electron flow through the 2 photosystem reaction centers. PSII is a light-driven water plastoquinone oxidoreductase, using light energy to abstract electrons from H(2)O, generating a proton gradient subsequently used for ATP formation. This Calycanthus floridus var. glaucus (Eastern sweetshrub) protein is Photosystem II reaction center protein Z.